The following is a 371-amino-acid chain: Neuropeptide Y receptor type 6 (371 aa).

Topologically, residues Met-1–Pro-31 are extracellular. N-linked (GlcNAc...) asparagine glycans are attached at residues Asn-11 and Asn-18. The chain crosses the membrane as a helical span at residues Ser-32–Gly-52. Over Asn-53–Asn-72 the chain is Cytoplasmic. A helical membrane pass occupies residues Ile-73–Thr-93. Topologically, residues Ala-94 to Leu-111 are extracellular. Cys-109 and Cys-196 are oxidised to a cystine. The chain crosses the membrane as a helical span at residues Thr-112–Ile-132. Residues Glu-133–His-150 lie on the Cytoplasmic side of the membrane. A helical membrane pass occupies residues Ala-151–Leu-171. The Extracellular portion of the chain corresponds to Ser-172–Leu-213. An N-linked (GlcNAc...) asparagine glycan is attached at Asn-182. A helical transmembrane segment spans residues Ile-214 to Ile-234. The Cytoplasmic portion of the chain corresponds to Cys-235 to Leu-263. The chain crosses the membrane as a helical span at residues Ile-264–Phe-284. Topologically, residues Asp-285–Asp-297 are extracellular. The chain crosses the membrane as a helical span at residues Leu-298–Tyr-318. Over Gly-319–Ile-371 the chain is Cytoplasmic. Cys-336 carries the S-palmitoyl cysteine lipid modification.

The protein belongs to the G-protein coupled receptor 1 family. As to expression, expressed in hippocampus, striatum, hypothalamus, cerebellum, small intestine, colon and adrenal gland.

The protein resides in the cell membrane. Functionally, receptor for neuropeptide Y and peptide YY. The activity of this receptor is mediated by G proteins that inhibit adenylate cyclase activity. The polypeptide is Neuropeptide Y receptor type 6 (NPY6R) (Oryctolagus cuniculus (Rabbit)).